Reading from the N-terminus, the 452-residue chain is Probable glycine dehydrogenase (decarboxylating) subunit 1 (452 aa).

This sequence belongs to the GcvP family. N-terminal subunit subfamily. As to quaternary structure, the glycine cleavage system is composed of four proteins: P, T, L and H. In this organism, the P 'protein' is a heterodimer of two subunits.

The enzyme catalyses N(6)-[(R)-lipoyl]-L-lysyl-[glycine-cleavage complex H protein] + glycine + H(+) = N(6)-[(R)-S(8)-aminomethyldihydrolipoyl]-L-lysyl-[glycine-cleavage complex H protein] + CO2. In terms of biological role, the glycine cleavage system catalyzes the degradation of glycine. The P protein binds the alpha-amino group of glycine through its pyridoxal phosphate cofactor; CO(2) is released and the remaining methylamine moiety is then transferred to the lipoamide cofactor of the H protein. This is Probable glycine dehydrogenase (decarboxylating) subunit 1 from Nitrosospira multiformis (strain ATCC 25196 / NCIMB 11849 / C 71).